The primary structure comprises 308 residues: Aspartate carbamoyltransferase catalytic subunit (308 aa).

Arginine 55 and threonine 56 together coordinate carbamoyl phosphate. Lysine 83 lines the L-aspartate pocket. Residues arginine 105, histidine 133, and glutamine 136 each contribute to the carbamoyl phosphate site. Positions 166 and 223 each coordinate L-aspartate. Glycine 264 and proline 265 together coordinate carbamoyl phosphate.

Belongs to the aspartate/ornithine carbamoyltransferase superfamily. ATCase family. As to quaternary structure, heterododecamer (2C3:3R2) of six catalytic PyrB chains organized as two trimers (C3), and six regulatory PyrI chains organized as three dimers (R2).

It carries out the reaction carbamoyl phosphate + L-aspartate = N-carbamoyl-L-aspartate + phosphate + H(+). It functions in the pathway pyrimidine metabolism; UMP biosynthesis via de novo pathway; (S)-dihydroorotate from bicarbonate: step 2/3. Its function is as follows. Catalyzes the condensation of carbamoyl phosphate and aspartate to form carbamoyl aspartate and inorganic phosphate, the committed step in the de novo pyrimidine nucleotide biosynthesis pathway. The polypeptide is Aspartate carbamoyltransferase catalytic subunit (Salinispora tropica (strain ATCC BAA-916 / DSM 44818 / JCM 13857 / NBRC 105044 / CNB-440)).